The following is a 65-amino-acid chain: Seminal plasma acrosin inhibitor A1 (65 aa).

Positions 1–59 (TRKQPNCNVYRSHLFFCTRQMDPICGTNGKSYANPCIFCSEKGLRNQKFDFGHWGHCRE) constitute a Kazal-like domain. Disulfide bonds link Cys7–Cys39, Cys17–Cys36, and Cys25–Cys57. O-linked (GalNAc...) serine glycosylation occurs at Ser12. The O-linked (GalNAc...) serine glycan is linked to Ser62.

Post-translationally, the identity of the O-linked saccharides are not reported in Ref.1. The O-linked polysaccharides on Ser-12 and Ser-62 are probably the mucin type linked to GalNAc. In terms of tissue distribution, seminal plasma.

It is found in the secreted. Inhibits acrosin. The sequence is that of Seminal plasma acrosin inhibitor A1 from Sus scrofa (Pig).